A 527-amino-acid chain; its full sequence is Dual specificity protein kinase shkA (527 aa).

Residues 45–304 (ITTESILGDG…GIVSELEEII (260 aa)) form the Protein kinase domain. Residues 51 to 59 (LGDGSFGTV) and K72 contribute to the ATP site. D167 acts as the Proton acceptor in catalysis. One can recognise an SH2 domain in the interval 424–513 (WFHGDISTSE…INTPCLGSRF (90 aa)).

Belongs to the protein kinase superfamily. TKL Ser/Thr protein kinase family. SH2 domain-containing protein kinase subfamily.

The protein localises to the membrane. It catalyses the reaction L-seryl-[protein] + ATP = O-phospho-L-seryl-[protein] + ADP + H(+). It carries out the reaction L-threonyl-[protein] + ATP = O-phospho-L-threonyl-[protein] + ADP + H(+). Required for proper chemotaxis and phagocytosis; proper spatiotemporal control of F-actin levels in chemotaxing cells. Negative regulator of the PI3K (phosphatidylinositol 3 kinase) pathway. Predominantly phosphorylates serines and threonines and tyrosines at a lower level. The polypeptide is Dual specificity protein kinase shkA (shkA) (Dictyostelium discoideum (Social amoeba)).